The sequence spans 278 residues: Betaine--homocysteine S-methyltransferase 1 (278 aa).

Positions 11-278 (KGILERLNSG…FGLEPRVATR (268 aa)) constitute a Hcy-binding domain. 3 positions are modified to N6-succinyllysine: Lys-40, Lys-93, and Lys-98. Cys-217 serves as a coordination point for Zn(2+). Residues Lys-232 and Lys-241 each carry the N6-succinyllysine modification.

As to quaternary structure, homotetramer. The cofactor is Zn(2+). As to expression, found exclusively in liver and kidney.

It is found in the cytoplasm. The protein localises to the cytosol. Its subcellular location is the nucleus. It carries out the reaction L-homocysteine + glycine betaine = N,N-dimethylglycine + L-methionine. The protein operates within amine and polyamine degradation; betaine degradation; sarcosine from betaine: step 1/2. It participates in amino-acid biosynthesis; L-methionine biosynthesis via de novo pathway; L-methionine from L-homocysteine (BhmT route): step 1/1. Inhibited by dimethylglycine and methylthioacetate. Involved in the regulation of homocysteine metabolism. Converts betaine and homocysteine to dimethylglycine and methionine, respectively. This reaction is also required for the irreversible oxidation of choline. The chain is Betaine--homocysteine S-methyltransferase 1 from Sus scrofa (Pig).